The following is a 745-amino-acid chain: Copper-transporting ATPase (745 aa).

In terms of domain architecture, HMA spans 1–67 (MKESFYIEGM…LIEKLGYSPK (67 aa)). Topologically, residues 1-83 (MKESFYIEGM…KKEFFSPNVK (83 aa)) are cytoplasmic. Cu cation is bound by residues C12 and C15. A helical membrane pass occupies residues 84–104 (LALAVIFTLFVVYLSMGAMLS). Residues 105 to 124 (PSLLPESLLAINNHSNFLNA) lie on the Extracellular side of the membrane. The helical transmembrane segment at 125–144 (CLQLIGALIVMHLGRDFYIQ) threads the bilayer. Residues 145 to 151 (GFKALWH) lie on the Cytoplasmic side of the membrane. The chain crosses the membrane as a helical span at residues 152–172 (RQPNMSSLIAIGTSAALISSL). Topologically, residues 173-194 (WQLYLVYTNHYTDQWSYGHYYF) are extracellular. Residues 195–215 (ESVCVILMFVMVGKRIENVSK) form a helical membrane-spanning segment. Residues 216 to 343 (DKALDAMQAL…KAEISRLADK (128 aa)) lie on the Cytoplasmic side of the membrane. The helical transmembrane segment at 344 to 366 (VSSVFVPSVIAIAILAFVVWLII) threads the bilayer. Residues 367–379 (APKPDFWWNFGIA) are Extracellular-facing. A helical transmembrane segment spans residues 380–397 (LEVFVSVLVISCPCALGL). At 398–685 (ATPMSILVAN…KLSQATIKNI (288 aa)) the chain is on the cytoplasmic side. D435 functions as the 4-aspartylphosphate intermediate in the catalytic mechanism. D631 and D635 together coordinate Mg(2+). The chain crosses the membrane as a helical span at residues 686-705 (KENLFWAFCYNSVFIPLACG). The Extracellular portion of the chain corresponds to 706–716 (VLYKANIMLSP). A helical membrane pass occupies residues 717-735 (AIAGLAMSLSSVSVVLNSQ). Residues 736–745 (RLRNFKIKDH) are Cytoplasmic-facing.

It belongs to the cation transport ATPase (P-type) (TC 3.A.3) family. Type IB subfamily.

It localises to the cell membrane. It catalyses the reaction Cu(2+)(in) + ATP + H2O = Cu(2+)(out) + ADP + phosphate + H(+). In terms of biological role, probably involved in copper export. This chain is Copper-transporting ATPase (copA), found in Helicobacter pylori (Campylobacter pylori).